We begin with the raw amino-acid sequence, 548 residues long: T-complex protein 1 subunit theta (548 aa).

N-acetylalanine is present on A2. A Phosphoserine modification is found at S23. Phosphotyrosine is present on Y30. ADP-binding residues include Y47 and G48. D99 serves as a coordination point for Mg(2+). ADP is bound by residues G100, T101, N102, and F103. G100, T101, and N102 together coordinate ATP. At S162 the chain carries Phosphoserine. M169, S170, and K171 together coordinate ADP. ATP contacts are provided by S170 and K171. Glycyl lysine isopeptide (Lys-Gly) (interchain with G-Cter in SUMO2) cross-links involve residues K224, K254, and K260. Phosphoserine is present on residues S269 and S317. An N6-acetyllysine mark is found at K318 and K400. G412 provides a ligand contact to ADP. Position 412 (G412) interacts with ATP. Residue K459 forms a Glycyl lysine isopeptide (Lys-Gly) (interchain with G-Cter in SUMO1) linkage. K466 is modified (N6-acetyllysine). D499 serves as a coordination point for ADP. ATP contacts are provided by D499 and K504. Phosphotyrosine is present on Y505. The interval 529–548 (PAGGPKPPSGKKDWDDDQND) is disordered. Residue K534 forms a Glycyl lysine isopeptide (Lys-Gly) (interchain with G-Cter in SUMO2) linkage. S537 is subject to Phosphoserine. Residue K539 forms a Glycyl lysine isopeptide (Lys-Gly) (interchain with G-Cter in SUMO2) linkage.

The protein belongs to the TCP-1 chaperonin family. In terms of assembly, component of the chaperonin-containing T-complex (TRiC), a hexadecamer composed of two identical back-to-back stacked rings enclosing a protein folding chamber. Each ring is made up of eight different subunits: TCP1/CCT1, CCT2, CCT3, CCT4, CCT5, CCT6A/CCT6, CCT7, CCT8. Interacts with PACRG. Interacts with DNAAF4. Interacts with synaptic plasticity regulator PANTS.

The protein resides in the cytoplasm. It is found in the cytoskeleton. It localises to the microtubule organizing center. The protein localises to the centrosome. Its subcellular location is the cilium basal body. It carries out the reaction ATP + H2O = ADP + phosphate + H(+). Component of the chaperonin-containing T-complex (TRiC), a molecular chaperone complex that assists the folding of actin, tubulin and other proteins upon ATP hydrolysis. The TRiC complex mediates the folding of WRAP53/TCAB1, thereby regulating telomere maintenance. As part of the TRiC complex may play a role in the assembly of BBSome, a complex involved in ciliogenesis regulating transports vesicles to the cilia. This Mus musculus (Mouse) protein is T-complex protein 1 subunit theta (Cct8).